The following is a 63-amino-acid chain: Conotoxin PnMRCL-0111 (63 aa).

The signal sequence occupies residues 1–19 (MRCLPVFIVLLLLIVSAPG). Positions 20-49 (FDARPKTEDDVPLSSFHDDLQRTVRTLLDI) are excised as a propeptide. Position 62 is a tryptophan amide (Trp-62).

Belongs to the conotoxin T superfamily. Contains 2 disulfide bonds that can be either 'C1-C3, C2-C4' or 'C1-C4, C2-C3', since these disulfide connectivities have been observed for conotoxins with cysteine framework V (for examples, see AC P0DQQ7 and AC P81755). Expressed by the venom duct.

Its subcellular location is the secreted. The polypeptide is Conotoxin PnMRCL-0111 (Conus pennaceus (Feathered cone)).